We begin with the raw amino-acid sequence, 265 residues long: Early E4 31 kDa protein (265 aa).

It belongs to the adenoviridae E4 30 to 34 kDa protein family. Interacts with E1B-55k.

It localises to the host nucleus. The protein localises to the host cytoplasm. Functionally, plays a major role to prevent cellular inhibition of viral genome replication by nuclear bodies. Assembles an SCF-like E3 ubiquitin ligase complex based on the cellular proteins ELOB, ELOC, CUL5 and RBX1, in cooperation with viral E1B-55K. This viral RING-type ligase ubiquitinates cellular substrates prior to proteasomal degradation: p53/TP53, LIG4, MRE11-RAD50-NBS1 (MRN) complex, ITGA3, DAXX and BLM. This chain is Early E4 31 kDa protein, found in Canine adenovirus serotype 1 (strain RI261) (CAdV-1).